Reading from the N-terminus, the 111-residue chain is Large ribosomal subunit protein uL23 (111 aa).

Belongs to the universal ribosomal protein uL23 family. Part of the 50S ribosomal subunit. Contacts protein L29, and trigger factor when it is bound to the ribosome.

Its function is as follows. One of the early assembly proteins it binds 23S rRNA. One of the proteins that surrounds the polypeptide exit tunnel on the outside of the ribosome. Forms the main docking site for trigger factor binding to the ribosome. This chain is Large ribosomal subunit protein uL23, found in Nitrosomonas eutropha (strain DSM 101675 / C91 / Nm57).